The chain runs to 65 residues: Large ribosomal subunit protein bL35 (65 aa).

The disordered stretch occupies residues methionine 1–lysine 52. Residues histidine 31–leucine 44 show a composition bias toward basic residues.

It belongs to the bacterial ribosomal protein bL35 family.

This chain is Large ribosomal subunit protein bL35, found in Limosilactobacillus reuteri (strain DSM 20016) (Lactobacillus reuteri).